The following is a 427-amino-acid chain: Gamma-glutamyl phosphate reductase (427 aa).

It belongs to the gamma-glutamyl phosphate reductase family.

It localises to the cytoplasm. It catalyses the reaction L-glutamate 5-semialdehyde + phosphate + NADP(+) = L-glutamyl 5-phosphate + NADPH + H(+). It functions in the pathway amino-acid biosynthesis; L-proline biosynthesis; L-glutamate 5-semialdehyde from L-glutamate: step 2/2. In terms of biological role, catalyzes the NADPH-dependent reduction of L-glutamate 5-phosphate into L-glutamate 5-semialdehyde and phosphate. The product spontaneously undergoes cyclization to form 1-pyrroline-5-carboxylate. The chain is Gamma-glutamyl phosphate reductase from Anaeromyxobacter sp. (strain K).